The primary structure comprises 231 residues: uncharacterized protein (231 aa).

This is an uncharacterized protein from Mycobacterium tuberculosis (strain ATCC 25618 / H37Rv).